The chain runs to 44 residues: Mu-conotoxin-like Cal 12.1.2h (44 aa).

4 disulfides stabilise this stretch: C3-C16, C11-C28, C18-C33, and C27-C38. A 6'-bromotryptophan modification is found at W17. The residue at position 23 (P23) is a 4-hydroxyproline. 6'-bromotryptophan is present on residues W36 and W37. The residue at position 39 (P39) is a 4-hydroxyproline. W43 carries the 6'-bromotryptophan modification.

In terms of tissue distribution, expressed by the venom duct.

It localises to the secreted. In terms of biological role, mu-conotoxins block voltage-gated sodium channels. This toxin reversibly blocks voltage-gated sodium channel in cephalopods, with no alteration in the voltage dependence of sodium conductance or on the kinetics of inactivation. The protein is Mu-conotoxin-like Cal 12.1.2h of Californiconus californicus (California cone).